Here is a 670-residue protein sequence, read N- to C-terminus: Solute carrier organic anion transporter family member 1A6 (670 aa).

Residues 1-20 (MGEPGKRVGIHRVRCFAKIK) lie on the Cytoplasmic side of the membrane. Residues 21–40 (VFLLALIWAYISKILSGVYM) traverse the membrane as a helical segment. At 41-59 (STMLTQLERQFNISTSIVG) the chain is on the extracellular side. N-linked (GlcNAc...) asparagine glycosylation occurs at Asn-52. The helical transmembrane segment at 60–80 (LINGSFEMGNLLVIVFVSYFG) threads the bilayer. At 81–86 (TKLHRP) the chain is on the cytoplasmic side. The chain crosses the membrane as a helical span at residues 87-111 (IMIGVGCAVMGLGCFIISLPHFLMG). Residues 112-155 (RYEYETTISPTSNLSSNSFLCVENRSQTLKPTQDPAECVKEIKS) lie on the Extracellular side of the membrane. Asn-124 and Asn-135 each carry an N-linked (GlcNAc...) asparagine glycan. The helical transmembrane segment at 156–184 (LMWIYVLVGNIIRGIGETPIMPLGISYIE) threads the bilayer. Topologically, residues 185-203 (DFAKSENSPLYIGILEVGK) are cytoplasmic. A helical membrane pass occupies residues 204 to 224 (MIGPILGYLMGPFCANIYVDT). Residues 225-242 (GSVNTDDLTITPTDTRWV) lie on the Extracellular side of the membrane. Residues 243–267 (GAWWIGFLVCAGVNVLTSIPFFFFP) form a helical membrane-spanning segment. Over 268-311 (KTLPKEGLQDNGDGTENAKEEKHRDKAKEENQGIIKEFFLMMKN) the chain is Cytoplasmic. The chain crosses the membrane as a helical span at residues 312–333 (LFCNPIYMLCVLTSVLQVNGVA). Residues 334–353 (NIVIYKPKYLEHHFGISTAK) lie on the Extracellular side of the membrane. The chain crosses the membrane as a helical span at residues 354 to 377 (AVFLIGLYTTPSVSAGYLISGFIM). Topologically, residues 378-381 (KKLK) are cytoplasmic. The chain crosses the membrane as a helical span at residues 382–405 (ITLKKAAIIALCLFMSECLLSLCN). At 406 to 513 (FMLTCDTTPI…PDCANKLQYF (108 aa)) the chain is on the extracellular side. Residues 433–488 (NKFLSDCNTRCNCLTKTWDPVCGNNGLAYMSPCLAGCEKSVGTGANMVFQNCSCIR) form the Kazal-like domain. Intrachain disulfides connect Cys-439–Cys-469, Cys-445–Cys-465, and Cys-454–Cys-486. Asn-483 and Asn-492 each carry an N-linked (GlcNAc...) asparagine glycan. The helical transmembrane segment at 514-536 (LIITVFCCFFYSLATIPGYMVFL) threads the bilayer. The Cytoplasmic segment spans residues 537-545 (RCMKSEEKS). Residues 546–571 (LGIGLQAFFMRLFAGIPAPIYFGALI) traverse the membrane as a helical segment. Over 572 to 605 (DRTCLHWGTLKCGEPGACRTYEVSSFRRLYLGLP) the chain is Extracellular. The chain crosses the membrane as a helical span at residues 606 to 623 (AALRGSIILPSFFILRLI). Residues 624 to 670 (RKLQIPGDTDSSEIELAETKPTEKESECTDMHKSSKVENDGELKTKL) lie on the Cytoplasmic side of the membrane. Thr-632 is modified (phosphothreonine). The segment at 633–670 (DSSEIELAETKPTEKESECTDMHKSSKVENDGELKTKL) is disordered. Phosphoserine is present on residues Ser-634 and Ser-635. The span at 640–670 (AETKPTEKESECTDMHKSSKVENDGELKTKL) shows a compositional bias: basic and acidic residues.

The protein belongs to the organo anion transporter (TC 2.A.60) family. As to expression, kidney specific.

The protein resides in the cell membrane. Its function is as follows. May mediate the Na(+)-independent transport of organic anions. This Mus musculus (Mouse) protein is Solute carrier organic anion transporter family member 1A6 (Slco1a6).